The chain runs to 708 residues: Leukotoxin translocation ATP-binding protein LktB (708 aa).

Residues 1 to 126 (MEANHQRNDL…ACYQGQLILV (126 aa)) form the Peptidase C39 domain. The 283-residue stretch at 155–437 (FLETLIVSIF…LAQLWQDFQQ (283 aa)) folds into the ABC transmembrane type-1 domain. 5 helical membrane passes run 159-179 (LIVSIFLQIFALITPLFFQVV), 192-212 (LNIITVALAIVIIFEIVLSGL), 270-290 (ALTSVLDLLFSFIFFAVMWYY), 296-316 (LVILGSLPCYILWSIFISPIL), and 389-409 (VMVINLWLGAHLVISGDLSIG). The ABC transporter domain maps to 469–704 (ISFKNIRFRY…SNGLYSYLHQ (236 aa)). Residue 503–510 (GRSGSGKS) participates in ATP binding.

Belongs to the ABC transporter superfamily. Protein-1 exporter (TC 3.A.1.109) family. Homodimer.

It is found in the cell inner membrane. The enzyme catalyses ATP + H2O + proteinSide 1 = ADP + phosphate + proteinSide 2.. Its function is as follows. Part of the ABC transporter complex LktBD involved in leukotoxin export. Transmembrane domains (TMD) form a pore in the inner membrane and the ATP-binding domain (NBD) is responsible for energy generation. The chain is Leukotoxin translocation ATP-binding protein LktB (lktB) from Mannheimia haemolytica (Pasteurella haemolytica).